A 115-amino-acid chain; its full sequence is Cholecystokinin (115 aa).

An N-terminal signal peptide occupies residues 1 to 20 (MNSGVCLCVLMAVLAAGALT). Positions 21-44 (QPVPPADPAGSGLQRAEEAPRRQL) are excised as a propeptide. Residues 23 to 52 (VPPADPAGSGLQRAEEAPRRQLRVSQRTDG) are disordered. O-linked (Xyl...) (chondroitin sulfate) serine glycosylation occurs at serine 31. A Sulfotyrosine modification is found at tyrosine 97. Phenylalanine 103 carries the post-translational modification Phenylalanine amide. A propeptide spanning residues 107 to 115 (SAEEYEYPS) is cleaved from the precursor. 2 positions are modified to sulfotyrosine: tyrosine 111 and tyrosine 113.

This sequence belongs to the gastrin/cholecystokinin family. As to quaternary structure, binds to CCK-A receptors in the pancreas and CCK-B receptors in the brain. Post-translationally, the precursor is cleaved by proteases to produce a number of active cholecystokinins. The precursor is cleaved by ACE, which removes the Gly-Arg-Arg peptide at the C-terminus, leading to mature hormone. Detected in cerebrospinal fluid and urine (at protein level).

It is found in the secreted. This peptide hormone induces gall bladder contraction and the release of pancreatic enzymes in the gut. Its function in the brain is not clear. Binding to CCK-A receptors stimulates amylase release from the pancreas, binding to CCK-B receptors stimulates gastric acid secretion. In Homo sapiens (Human), this protein is Cholecystokinin (CCK).